A 527-amino-acid polypeptide reads, in one-letter code: 4-alpha-glucanotransferase (527 aa).

Belongs to the disproportionating enzyme family.

It localises to the cytoplasm. It carries out the reaction Transfers a segment of a (1-&gt;4)-alpha-D-glucan to a new position in an acceptor, which may be glucose or a (1-&gt;4)-alpha-D-glucan.. In Chlamydia trachomatis serovar D (strain ATCC VR-885 / DSM 19411 / UW-3/Cx), this protein is 4-alpha-glucanotransferase (malQ).